The chain runs to 89 residues: Large ribosomal subunit protein bL27 (89 aa).

Residues 1 to 22 (MAHKKAGGSSRNGRDSESKRLG) are disordered.

It belongs to the bacterial ribosomal protein bL27 family.

The sequence is that of Large ribosomal subunit protein bL27 from Brucella abortus (strain S19).